The sequence spans 73 residues: Conotoxin Gla(3)-TxVI (73 aa).

An N-terminal signal peptide occupies residues 1 to 19 (MQKLIILLLVAAVLMSAQA). The propeptide occupies 20–44 (VLQEKRPKEKIKFLSKRKTDAEKQQ). 3 disulfides stabilise this stretch: Cys-48–Cys-62, Cys-55–Cys-66, and Cys-61–Cys-71. Pro-49 is modified (4-hydroxyproline). 4-carboxyglutamate; partial is present on Glu-53. Pro-54 is modified (4-hydroxyproline). Glu-60 bears the 4-carboxyglutamate mark. Trp-64 is subject to 6'-bromotryptophan.

This sequence belongs to the conotoxin O2 superfamily. As to expression, expressed by the venom duct.

Its subcellular location is the secreted. The polypeptide is Conotoxin Gla(3)-TxVI (Conus textile (Cloth-of-gold cone)).